The chain runs to 4544 residues: Prolow-density lipoprotein receptor-related protein 1 (4544 aa).

An N-terminal signal peptide occupies residues 1–19 (MLTPPLLLLLPLLSALVAA). The Extracellular segment spans residues 20 to 4419 (AIDAPKTCSP…EHVFSQQQPG (4400 aa)). LDL-receptor class A domains lie at 25–66 (KTCS…ICPQ) and 70–110 (QRCQ…HCRE). Disulfide bonds link Cys-27–Cys-40, Cys-34–Cys-53, Cys-47–Cys-64, Cys-72–Cys-85, Cys-79–Cys-98, and Cys-92–Cys-108. Residues 111 to 149 (LQGNCSRLGCQHHCVPTLDGPTCYCNSSFQLQADGKTCK) enclose the EGF-like 1 domain. N-linked (GlcNAc...) asparagine glycosylation occurs at Asn-114. 6 cysteine pairs are disulfide-bonded: Cys-115/Cys-124, Cys-120/Cys-133, Cys-135/Cys-148, Cys-154/Cys-164, Cys-160/Cys-173, and Cys-175/Cys-188. N-linked (GlcNAc...) asparagine glycosylation occurs at Asn-136. Positions 150–189 (DFDECSVYGTCSQLCTNTDGSFICGCVEGYLLQPDNRSCK) constitute an EGF-like 2; calcium-binding domain. N-linked (GlcNAc...) asparagine glycans are attached at residues Asn-185, Asn-239, and Asn-274. 3 LDL-receptor class B repeats span residues 292 to 334 (GNFY…DPAM), 335 to 378 (GKVF…DLVS), and 379 to 422 (RLVY…FENY). A glycan (N-linked (GlcNAc...) asparagine) is linked at Asn-357. N-linked (GlcNAc...) asparagine glycosylation is present at Asn-446. The 47-residue stretch at 474-520 (RSHACENDQYGKPGGCSDICLLANSHKARTCRCRSGFSLGSDGKSCK) folds into the EGF-like 3 domain. Disulfide bonds link Cys-478–Cys-493, Cys-489–Cys-504, and Cys-506–Cys-519. LDL-receptor class B repeat units follow at residues 571-613 (GFIY…DWMG), 614-659 (DNLY…DPLN), 660-710 (GWMY…DIPA), and 711-754 (GRLY…HGNY). Asn-729 is a glycosylation site (N-linked (GlcNAc...) (complex) asparagine). Residues 803–843 (GTNKCRVNNGGCSSLCLATPGSRQCACAEDQVLDADGVTCL) enclose the EGF-like 4 domain. Cystine bridges form between Cys-807/Cys-818, Cys-814/Cys-827, Cys-829/Cys-842, Cys-854/Cys-866, Cys-861/Cys-879, Cys-873/Cys-890, Cys-895/Cys-907, Cys-902/Cys-920, Cys-914/Cys-931, Cys-936/Cys-948, Cys-943/Cys-961, Cys-955/Cys-971, Cys-976/Cys-989, Cys-984/Cys-1002, Cys-996/Cys-1011, Cys-1015/Cys-1027, Cys-1022/Cys-1040, Cys-1034/Cys-1051, Cys-1062/Cys-1075, Cys-1069/Cys-1088, Cys-1082/Cys-1097, Cys-1104/Cys-1118, Cys-1112/Cys-1131, Cys-1125/Cys-1140, Cys-1145/Cys-1159, Cys-1152/Cys-1172, Cys-1166/Cys-1182, Cys-1185/Cys-1196, Cys-1192/Cys-1206, Cys-1208/Cys-1221, Cys-1227/Cys-1237, Cys-1233/Cys-1246, and Cys-1248/Cys-1261. LDL-receptor class A domains lie at 852–892 (PQCQ…LCHQ), 893–933 (HTCP…TCSA), 934–973 (RTCP…SCAY), 974–1013 (PTCF…GCSH), 1013–1053 (HSCS…NCTN), 1060–1099 (GGCH…SCEG), 1102–1142 (HVCD…NCES), and 1143–1182 (LACR…GELC). Ca(2+)-binding residues include Trp-871, Asp-874, Asp-876, Asp-878, Asp-884, and Glu-885. An N-linked (GlcNAc...) asparagine glycan is attached at Asn-928. Residues Trp-1032, Asp-1035, Asp-1037, Asp-1039, Asp-1045, and Glu-1046 each coordinate Ca(2+). Residue Asn-1050 is glycosylated (N-linked (GlcNAc...) asparagine). Ca(2+)-binding residues include Trp-1080, Asp-1083, Asp-1085, Asp-1087, Asp-1093, and Glu-1094. N-linked (GlcNAc...) asparagine glycosylation is found at Asn-1154 and Asn-1155. EGF-like domains follow at residues 1183 to 1222 (DQCS…HTCQ) and 1223 to 1262 (IQSY…ESCR). Asn-1195 and Asn-1218 each carry an N-linked (GlcNAc...) asparagine glycan. LDL-receptor class B repeat units lie at residues 1309-1355 (SALY…DWIA), 1356-1398 (GNIY…DPRD), 1399-1445 (GILF…DYLE), 1446-1490 (KRIL…YGGE), and 1491-1531 (VYWT…YHPS). Asn-1511 is a glycosylation site (N-linked (GlcNAc...) (complex) asparagine). Residues 1536–1579 (APNPCEANGGQGPCSHLCLINYNRTVSCACPHLMKLHKDNTTCY) form the EGF-like 7 domain. Cystine bridges form between Cys-1540-Cys-1553, Cys-1549-Cys-1563, and Cys-1565-Cys-1578. N-linked (GlcNAc...) asparagine glycans are attached at residues Asn-1558, Asn-1575, Asn-1616, and Asn-1645. 4 LDL-receptor class B repeats span residues 1627–1669 (QRVY…DWVS), 1670–1713 (RNLF…HPLR), 1714–1753 (GKLY…DFPE), and 1754–1798 (SKLY…MGDK). N-linked (GlcNAc...) asparagine glycans are attached at residues Asn-1723, Asn-1733, Asn-1763, and Asn-1825. The region spanning 1846-1887 (GTNPCSVNNGDCSQLCLPTSETTRSCMCTAGYSLRSGQQACE) is the EGF-like 8 domain. Disulfide bonds link Cys-1850/Cys-1861, Cys-1857/Cys-1871, and Cys-1873/Cys-1886. Asn-1933 carries an N-linked (GlcNAc...) asparagine glycan. 4 LDL-receptor class B repeats span residues 1934 to 1976 (DTIY…DWIA), 1977 to 2019 (GNIY…HPEK), 2020 to 2063 (GYLF…DYQD), and 2064 to 2107 (GKLY…FEDF). Asn-1995 carries an N-linked (GlcNAc...) asparagine glycan. Lys-2009 carries the N6-acetyllysine modification. Asn-2048 carries an N-linked (GlcNAc...) asparagine glycan. Residues Asn-2117 and Asn-2127 are each glycosylated (N-linked (GlcNAc...) asparagine). An EGF-like 9 domain is found at 2155–2195 (GTNVCAVANGGCQQLCLYRGRGQRACACAHGMLAEDGASCR). 3 cysteine pairs are disulfide-bonded: Cys-2159-Cys-2170, Cys-2166-Cys-2180, and Cys-2182-Cys-2194. LDL-receptor class B repeat units lie at residues 2253–2294 (NRIF…HRGW), 2295–2343 (DTLY…DECQ), 2344–2388 (NLMF…DHRA), 2389–2431 (EKLY…YGEH), and 2432–2473 (IFWT…VAND). N-linked (GlcNAc...) asparagine glycosylation is present at Asn-2472. The region spanning 2478–2518 (ELSPCRINNGGCQDLCLLTHQGHVNCSCRGGRILQDDLTCR) is the EGF-like 10 domain. 3 disulfides stabilise this stretch: Cys-2482/Cys-2493, Cys-2489/Cys-2503, and Cys-2505/Cys-2517. N-linked (GlcNAc...) asparagine glycosylation occurs at Asn-2502. N-linked (GlcNAc...) asparagine glycosylation is present at Asn-2521. LDL-receptor class A domains are found at residues 2522 to 2563 (SSCR…YCNS), 2564 to 2602 (RRCK…PCNK), 2603 to 2641 (TACG…NCSA), 2642 to 2690 (TDCS…DCPG), 2694 to 2732 (PRCP…HCNK), 2732 to 2771 (KFCS…HCEG), and 2772 to 2814 (KTCG…GCLY). Disulfide bonds link Cys-2524–Cys-2537, Cys-2532–Cys-2550, Cys-2544–Cys-2561, Cys-2566–Cys-2578, Cys-2573–Cys-2591, and Cys-2585–Cys-2600. Asn-2539 carries an N-linked (GlcNAc...) asparagine glycan. Asn-2601 is a glycosylation site (N-linked (GlcNAc...) asparagine). Cystine bridges form between Cys-2605/Cys-2617, Cys-2612/Cys-2630, Cys-2624/Cys-2639, Cys-2644/Cys-2666, Cys-2660/Cys-2679, Cys-2673/Cys-2688, Cys-2696/Cys-2708, Cys-2703/Cys-2721, Cys-2715/Cys-2730, Cys-2734/Cys-2746, Cys-2741/Cys-2759, Cys-2753/Cys-2769, Cys-2774/Cys-2787, Cys-2781/Cys-2800, and Cys-2794/Cys-2812. 2 N-linked (GlcNAc...) asparagine glycosylation sites follow: Asn-2620 and Asn-2638. The N-linked (GlcNAc...) asparagine glycan is linked to Asn-2815. 3 consecutive LDL-receptor class A domains span residues 2816–2855 (STCD…ECEY), 2856–2899 (PTCG…HCTS), and 2902–2940 (HKCN…RGCH). 15 disulfides stabilise this stretch: Cys-2818-Cys-2830, Cys-2825-Cys-2843, Cys-2837-Cys-2853, Cys-2858-Cys-2870, Cys-2865-Cys-2884, Cys-2878-Cys-2897, Cys-2904-Cys-2917, Cys-2912-Cys-2930, Cys-2924-Cys-2939, Cys-2944-Cys-2956, Cys-2952-Cys-2965, Cys-2967-Cys-2980, Cys-2986-Cys-2996, Cys-2992-Cys-3005, and Cys-3007-Cys-3021. A glycan (N-linked (GlcNAc...) asparagine) is linked at Asn-2905. Residues 2941-2981 (INECLSRKLSGCSQDCEDLKIGFKCRCRPGFRLKDDGRTCA) enclose the EGF-like 11 domain. Positions 2982–3022 (DVDECSTTFPCSQRCINTHGSYKCLCVEGYAPRGGDPHSCK) constitute an EGF-like 12; calcium-binding domain. 2 N-linked (GlcNAc...) asparagine glycosylation sites follow: Asn-3048 and Asn-3089. LDL-receptor class B repeat units follow at residues 3069–3113 (QMIY…DWVG), 3114–3156 (GNLY…DVQN), 3157–3200 (GYLY…DYVT), 3201–3243 (ERIY…FEDY), and 3244–3284 (VYWT…FHAL). An N-linked (GlcNAc...) asparagine glycan is attached at Asn-3264. The EGF-like 13 domain occupies 3290–3331 (PNHPCKVNNGGCSNLCLLSPGGGHKCACPTNFYLGSDGRTCV). 3 disulfide bridges follow: Cys-3294–Cys-3305, Cys-3301–Cys-3315, and Cys-3317–Cys-3330. 11 LDL-receptor class A domains span residues 3332 to 3371 (SNCT…DCPE), 3372 to 3410 (FKCR…NCDI), 3411 to 3450 (HVCL…DCPE), 3451 to 3491 (VTCA…NCTQ), 3492 to 3533 (MTCG…ECDE), 3534 to 3572 (RTCE…SCTP), 3573 to 3611 (RPCS…DCTP), 3611 to 3649 (PRCD…ACGT), 3652 to 3692 (RTCP…ECAR), 3693 to 3733 (FVCP…DCEP), and 3739 to 3778 (THCK…DCSI). N-linked (GlcNAc...) asparagine glycosylation occurs at Asn-3333. Disulfide bonds link Cys-3334–Cys-3346, Cys-3341–Cys-3359, Cys-3353–Cys-3369, Cys-3374–Cys-3386, Cys-3381–Cys-3399, Cys-3393–Cys-3408, Cys-3413–Cys-3426, Cys-3420–Cys-3439, Cys-3433–Cys-3448, Cys-3453–Cys-3466, Cys-3460–Cys-3479, Cys-3473–Cys-3489, Cys-3494–Cys-3507, Cys-3501–Cys-3520, Cys-3514–Cys-3531, Cys-3536–Cys-3548, Cys-3543–Cys-3561, Cys-3555–Cys-3570, Cys-3575–Cys-3587, Cys-3582–Cys-3600, Cys-3594–Cys-3609, Cys-3613–Cys-3625, Cys-3620–Cys-3638, Cys-3632–Cys-3647, Cys-3654–Cys-3666, Cys-3661–Cys-3679, Cys-3673–Cys-3690, Cys-3695–Cys-3709, Cys-3703–Cys-3722, Cys-3716–Cys-3731, Cys-3741–Cys-3754, Cys-3749–Cys-3767, Cys-3761–Cys-3776, Cys-3785–Cys-3798, Cys-3792–Cys-3807, Cys-3809–Cys-3822, Cys-3828–Cys-3838, Cys-3834–Cys-3847, and Cys-3849–Cys-3860. An N-linked (GlcNAc...) asparagine glycan is attached at Asn-3488. N-linked (GlcNAc...) asparagine glycosylation occurs at Asn-3662. 2 consecutive EGF-like domains span residues 3781-3823 (KLTS…PGCQ) and 3824-3861 (DINE…NTCK). N-linked (GlcNAc...) asparagine glycosylation is present at Asn-3788. The N-linked (GlcNAc...) asparagine glycan is linked to Asn-3839. LDL-receptor class B repeat units lie at residues 3912-3954 (GRVY…HLNI), 3970-4012 (GNVY…DPLR), 4013-4056 (GTMY…DYHN), and 4057-4101 (ERLY…FEDY). The short motif at 3940-3943 (RHRR) is the Recognition site for proteolytical processing element. A glycan (N-linked (GlcNAc...) asparagine) is linked at Asn-3953. N-linked (GlcNAc...) asparagine glycosylation is found at Asn-4075 and Asn-4125. EGF-like domains lie at 4147-4183 (VTNP…GTCV), 4196-4232 (RPGT…DKCE), 4232-4268 (ELDQ…PKCT), 4268-4304 (TQQV…DRCQ), 4304-4340 (QYRQ…SRCE), 4340-4375 (EVNK…PSCL), and 4373-4409 (SCLT…PRCE). 17 disulfide bridges follow: Cys-4151–Cys-4160, Cys-4156–Cys-4169, Cys-4171–Cys-4182, Cys-4200–Cys-4210, Cys-4204–Cys-4220, Cys-4222–Cys-4231, Cys-4236–Cys-4246, Cys-4240–Cys-4256, Cys-4258–Cys-4267, Cys-4272–Cys-4282, Cys-4276–Cys-4292, Cys-4294–Cys-4303, Cys-4308–Cys-4318, Cys-4312–Cys-4328, Cys-4330–Cys-4339, Cys-4344–Cys-4352, and Cys-4347–Cys-4363. Asn-4179 carries an N-linked (GlcNAc...) asparagine glycan. Residues Asn-4278 and Asn-4279 are each glycosylated (N-linked (GlcNAc...) asparagine). An N-linked (GlcNAc...) asparagine glycan is attached at Asn-4364. Intrachain disulfides connect Cys-4365–Cys-4374, Cys-4377–Cys-4387, Cys-4381–Cys-4397, and Cys-4399–Cys-4408. The chain crosses the membrane as a helical span at residues 4420 to 4444 (HIASILIPLLLLLLLVLVAGVVFWY). The Cytoplasmic portion of the chain corresponds to 4445 to 4544 (KRRVQGAKGF…PEDEIGDPLA (100 aa)). Positions 4445 to 4544 (KRRVQGAKGF…PEDEIGDPLA (100 aa)) are interaction with MAFB. At Thr-4460 the chain carries Phosphothreonine. The NPXY motif signature appears at 4502-4507 (FTNPVY). Tyr-4507 carries the post-translational modification Phosphotyrosine. Phosphoserine is present on residues Ser-4517, Ser-4520, and Ser-4523.

It belongs to the LDLR family. As to quaternary structure, heterodimer of an 85-kDa membrane-bound carboxyl subunit and a non-covalently attached 515-kDa N-terminal subunit. Intracellular domain interacts with MAFB. Found in a complex with PID1/PCLI1, LRP1 and CUBNI. Interacts with SNX17, PID1/PCLI1, PDGF and CUBN. The intracellular domain interacts with SHC1, GULP1 and DAB1. Can weakly interact (via NPXY motif) with DAB2 (via PID domain); the interaction is enhanced by tyrosine phosphorylation of the NPXY motif. Interacts with MDK; promotes neuronal survival. Interacts with LRPAP1; this interaction is followed by rapid internalization. Interacts with uPA/PLAU and PAI1/SERPINE1, either individually or in complex with each other, leading to rapid endocytosis; this interaction is abolished in the presence of LRPAP1/RAP. Also interacts with tPA/PLAT alone or in complex with SERPINE1. Interacts with the urokinase receptor PLAUR; this interaction leads to PLAUR internalization and is impaired in the presence of SORL1. Interacts with PDGFB. Interacts with TAU/MAPT, leading to endocytosis; this interaction is reduced in the presence of LRPAP1/RAP. Interacts with IGFBP3; this interaction mediates cell growth inhibition independently of IGF1. Interacts with ADGRG6. (Microbial infection) Interacts with bacterial exotoxins. In terms of assembly, (Microbial infection) Interacts with Rift valley fever virus (RVFV) glycoprotein N; this interaction facilitates virus entry. Cleaved into a 85 kDa membrane-spanning subunit (LRP-85) and a 515 kDa large extracellular domain (LRP-515) that remains non-covalently associated. Gamma-secretase-dependent cleavage of LRP-85 releases the intracellular domain from the membrane. In terms of processing, the N-terminus is blocked. Post-translationally, phosphorylated on serine and threonine residues. Phosphorylated on tyrosine residues upon stimulation with PDGF. Tyrosine phosphorylation promotes interaction with SHC1. As to expression, most abundant in liver, brain and lung.

The protein resides in the cell membrane. The protein localises to the membrane. It localises to the coated pit. It is found in the cytoplasm. Its subcellular location is the nucleus. The protein resides in the golgi outpost. The protein localises to the cytoskeleton. It localises to the microtubule organizing center. Functionally, endocytic receptor involved in endocytosis and in phagocytosis of apoptotic cells. Required for early embryonic development. Involved in cellular lipid homeostasis. Involved in the plasma clearance of chylomicron remnants and activated LRPAP1 (alpha 2-macroglobulin), as well as the local metabolism of complexes between plasminogen activators and their endogenous inhibitors. Acts as an LRPAP1 alpha-2-macroglobulin receptor. Acts as TAU/MAPT receptor and controls the endocytosis of TAU/MAPT as well as its subsequent spread. May modulate cellular events, such as APP metabolism, kinase-dependent intracellular signaling, neuronal calcium signaling as well as neurotransmission. Also acts as a receptor for IGFBP3 to mediate cell growth inhibition. In terms of biological role, (Microbial infection) Functions as a receptor for Pseudomonas aeruginosa exotoxin A. The polypeptide is Prolow-density lipoprotein receptor-related protein 1 (Homo sapiens (Human)).